The chain runs to 384 residues: MEDIPTMVKVDRGESQILSCRGRRCGLKVLGYVTGDMKEFANWLKDKPVVLQFMDWILRGISQVVFVSNPISGILILAGLLVQNPWWALCGCVGTVVSTLTALLLSQDRSAIAAGLQGYNATLVGILMAVFSDKGDYFWWLIFPVSAMSMTCPVFSSALSSLFSKWDLPVFTLPFNMALSLYLSATGHYNTFFPSKLFMPVSSVPNITWSELSALELLKSLPVGVGQIYGCDNPWTGAIFLCAILLSSPLMCLHAAIGSLLGVIAGLSLAAPFKDIYSGLWGFNSSLACIAIGGMFMALTWQTHLLALACALFTAYFGACMTHLMAAVHLPACTWSFCLATLLFLLLTTENPNIYRMPLSKVTYSEENRIFYLQNKKRVVDSPL.

5 helical membrane-spanning segments follow: residues 61 to 81, 85 to 105, 111 to 131, 138 to 158, and 168 to 188; these read ISQV…AGLL, PWWA…ALLL, AIAA…MAVF, FWWL…FSSA, and LPVF…ATGH. N-linked (GlcNAc...) asparagine glycosylation is present at N206. A run of 4 helical transmembrane segments spans residues 250-270, 279-299, 305-325, and 327-347; these read LMCL…LSLA, GLWG…FMAL, LLAL…THLM, and AVHL…FLLL.

This sequence belongs to the urea transporter family. As to quaternary structure, homotrimer; each subunit contains a pore through which urea permeates. Identified in a complex with STOM. In terms of tissue distribution, expressed in brain, spleen, kidney, testis and lung, with highest levels in brain.

The protein localises to the cell membrane. It localises to the basolateral cell membrane. The catalysed reaction is urea(in) = urea(out). Functionally, mediates the transport of urea driven by a concentration gradient across the cell membrane. Mediates the transport of urea across the cell membranes of erythrocytes and the renal inner medullary collecting duct which is critical to the urinary concentrating mechanism. Facilitates water transport in erythrocytes. This Rattus norvegicus (Rat) protein is Urea transporter 1 (Slc14a1).